Here is a 386-residue protein sequence, read N- to C-terminus: Sphingosine 1-phosphate receptor 4 (386 aa).

Residues 1-56 (MNISTWSTLVTPESCHRLAASGHSLLIVLHYNHSGRLASRGGSEDGGGLGMLRGPS) are Extracellular-facing. Asparagine 2 and asparagine 32 each carry an N-linked (GlcNAc...) asparagine glycan. Residues 57 to 77 (VAAGCLVVLENAMVLAAIAIY) form a helical membrane-spanning segment. Residues 78 to 87 (MRSRRWVYYC) lie on the Cytoplasmic side of the membrane. The chain crosses the membrane as a helical span at residues 88-108 (LLNITLSDLLTGLAYVVNVLL). The Extracellular portion of the chain corresponds to 109–120 (SGTRTFQLSPVH). A helical transmembrane segment spans residues 121–141 (WFLREGLLFMALAASTFSLLF). Over 142-163 (TAGERFATMVRVAESGATKTSR) the chain is Cytoplasmic. Residues 164-184 (VYGCIGLCWLLAAILGLLPLL) traverse the membrane as a helical segment. Topologically, residues 185–208 (GWNCVCAFPRCSSLLPLYSKGYVL) are extracellular. Residues 209–229 (FCVVVFALILVAILSLYGAIF) traverse the membrane as a helical segment. At 230–254 (RVVRANGQKSPRPPARRKSRRLLNT) the chain is on the cytoplasmic side. The helical transmembrane segment at 255 to 275 (VLMILVAFVVCWGPLFGLLLA) threads the bilayer. Over 276-290 (DIFGSNVWAQEYLRG) the chain is Extracellular. A helical transmembrane segment spans residues 291-311 (MDWILALAVFNSAINPLIYSF). Residues 312–386 (RSREVQRAVL…LSSISSVRST (75 aa)) lie on the Cytoplasmic side of the membrane. Cysteine 325 carries the S-palmitoyl cysteine lipid modification.

The protein belongs to the G-protein coupled receptor 1 family. In terms of tissue distribution, specifically expressed in fetal and adult lymphoid and hematopoietic tissue. Expressed in lung, spleen, thymus and lymph node but absent in other non-lymphatic tissue. Coexpressed with GNA15 at the same relative levels in all tissues examined, with the highest levels in adult spleen and lung.

The protein resides in the cell membrane. Its function is as follows. Receptor for the lysosphingolipid sphingosine 1-phosphate (S1P). S1P is a bioactive lysophospholipid that elicits diverse physiological effect on most types of cells and tissues. May be involved in cell migration processes that are specific for lymphocytes. The protein is Sphingosine 1-phosphate receptor 4 (S1pr4) of Mus musculus (Mouse).